Consider the following 315-residue polypeptide: MNKRPLLLCLGLWVACTLSKPTEKKDRVHHDSQLSDKVHDDAQNFDYDHDAFLGAEDAKTFDQLTPEESKERLGMIVGKIDLDNDGYVTEGELTAWIKKAQKKYVYDNVERQWQEFDLSQDGLVSWDEYRNVTYGTYLDDQDPDNSFNYKQMMIRDERRFKMADKDGDLVATKEEFTAFLHPEEFDYMKDIVVLETMEDIDKNGDGLIDLEEYIGDMYNHDGDANEPEWVKTEREQFMEFRDKNHDGKMDKEETKDWILPSDYDHSEAESRHLVYESDHNQDGKLTREEIVDKYDLFVGSQATDFGEALVRHDEF.

Residues 1-19 form the signal peptide; that stretch reads MNKRPLLLCLGLWVACTLS. EF-hand domains follow at residues 68–103, 104–139, 151–186, 188–223, 229–264, and 265–300; these read ESKE…AQKK, YVYD…TYLD, QMMI…EEFD, MKDI…HDGD, WVKT…SDYD, and HSEA…FVGS. Ca(2+) contacts are provided by Asp81, Asp83, Asp85, Tyr87, Glu92, Asp117, Ser119, Asp121, and Glu128. N-linked (GlcNAc...) asparagine glycosylation occurs at Asn131. Asp164, Asp166, Asp168, Glu175, Asp201, Asn203, Asp205, Glu212, Asp242, Asn244, Asp246, Lys248, Glu253, Asp278, Asn280, Asp282, Lys284, and Glu289 together coordinate Ca(2+). A Prevents secretion from ER motif is present at residues 312 to 315; sequence HDEF.

This sequence belongs to the CREC family. Interacts with ggcx.

It is found in the endoplasmic reticulum membrane. It localises to the golgi apparatus. The protein localises to the secreted. The protein resides in the melanosome. Its subcellular location is the sarcoplasmic reticulum lumen. Its function is as follows. Involved in regulation of vitamin K-dependent carboxylation of multiple N-terminal glutamate residues. Seems to inhibit gamma-carboxylase ggcx. Binds 7 calcium ions with a low affinity. This Xenopus laevis (African clawed frog) protein is Calumenin (calu).